Consider the following 400-residue polypeptide: Methylthioribose kinase (400 aa).

Residues Asn40, Lys57, and Glu111 to Leu113 each bind ATP. Position 229 (Asp229) interacts with substrate. Asp246–Glu248 contacts ATP. Arg344 is a substrate binding site.

It belongs to the methylthioribose kinase family. In terms of assembly, homodimer.

The enzyme catalyses 5-(methylsulfanyl)-D-ribose + ATP = 5-(methylsulfanyl)-alpha-D-ribose 1-phosphate + ADP + H(+). It functions in the pathway amino-acid biosynthesis; L-methionine biosynthesis via salvage pathway; S-methyl-5-thio-alpha-D-ribose 1-phosphate from S-methyl-5'-thioadenosine (hydrolase route): step 2/2. Its function is as follows. Catalyzes the phosphorylation of methylthioribose into methylthioribose-1-phosphate. This Pectobacterium atrosepticum (strain SCRI 1043 / ATCC BAA-672) (Erwinia carotovora subsp. atroseptica) protein is Methylthioribose kinase.